Consider the following 622-residue polypeptide: Carbon monoxide dehydrogenase (622 aa).

Positions 40, 49, 52, 57, and 68 each coordinate [4Fe-4S] cluster. Residues histidine 256, cysteine 334, cysteine 442, cysteine 473, and cysteine 514 each contribute to the [Ni-4Fe-5S] cluster site.

Belongs to the Ni-containing carbon monoxide dehydrogenase family. In terms of assembly, homodimer. Requires [4Fe-4S] cluster as cofactor. It depends on [Ni-4Fe-5S] cluster as a cofactor.

It catalyses the reaction CO + 2 oxidized [2Fe-2S]-[ferredoxin] + H2O = 2 reduced [2Fe-2S]-[ferredoxin] + CO2 + 2 H(+). In terms of biological role, CODH oxidizes carbon monoxide coupled, via CooF, to the reduction of a hydrogen cation by a hydrogenase (possibly CooH). This is Carbon monoxide dehydrogenase (cooS) from Archaeoglobus fulgidus (strain ATCC 49558 / DSM 4304 / JCM 9628 / NBRC 100126 / VC-16).